A 233-amino-acid polypeptide reads, in one-letter code: Beta-fibrinogenase brevinase (233 aa).

Residues 1-224 (VIGGDECNIN…YIDWIQSIIA (224 aa)) form the Peptidase S1 domain. Disulfide bonds link Cys7–Cys138, Cys25–Cys41, Cys73–Cys231, Cys117–Cys185, Cys149–Cys164, and Cys175–Cys200. The active-site Charge relay system is the His40. Asn54 is a glycosylation site (N-linked (GlcNAc...) asparagine). The active-site Charge relay system is Asp85. A glycan (N-linked (GlcNAc...) asparagine) is linked at Asn129. Residues 176-178 (RGD) carry the Cell attachment site motif. Ser179 acts as the Charge relay system in catalysis. A glycan (N-linked (GlcNAc...) asparagine) is linked at Asn226.

This sequence belongs to the peptidase S1 family. Snake venom subfamily. As to quaternary structure, heterodimer of the brevinase A chain and the brevinase B chain. As to expression, expressed by the venom gland.

It is found in the secreted. Its activity is regulated as follows. The fibrinolytic activity is completely inhibited by PMSF, diisopropylfluorophosphate (DFP), pefabloc, dithiothreitol (DTT) and Zn(2+), but not by Pepstatin A, E64, iodoacetate, chymostatin, tosyl-Lphenylalanine chloromethyl ketone (TPCK), soybean trypsin inhibitor (SBTI), phosphoramidon, Ca(2+), Co(2+), Cu(2+), Fe(2+), Mg(2+), Mn(2+), K(+), and Na(+). Functionally, snake venom serine protease that has fibrinogenolytic activities. Preferentially cleaves the Bbeta-chain (FGB) and more slowly the Aa-chain (FGA) of fibrinogen, but does not affect the gamma-chain. Also has fibrinolytic activity. May play a role in antithrombotic reaction as well as thrombolytic reaction. The sequence is that of Beta-fibrinogenase brevinase from Gloydius blomhoffii (Mamushi).